A 210-amino-acid chain; its full sequence is Thymidylate kinase (210 aa).

11-18 (GGEGAGKT) serves as a coordination point for ATP.

This sequence belongs to the thymidylate kinase family.

The enzyme catalyses dTMP + ATP = dTDP + ADP. Phosphorylation of dTMP to form dTDP in both de novo and salvage pathways of dTTP synthesis. This chain is Thymidylate kinase (tmk), found in Halalkalibacterium halodurans (strain ATCC BAA-125 / DSM 18197 / FERM 7344 / JCM 9153 / C-125) (Bacillus halodurans).